A 248-amino-acid polypeptide reads, in one-letter code: MKATVRDLDGDDAGEVELPAVFETDYRPDLIKRAVLAAQANRIQDTGTDEYAGLRTPAESPGSGRGMAHVPRQNGRAREVPQAVSGRPAHPPKAEKDRGLDINTKERKLATRSAIAATANADRVEERGHEFDEETDLPLVVSDEFEDLVKTQEAVDVLEALGVYDDIERAEDGKTVRAGRGTTRGRKYTEPKSVLVVTSDDQSLAARNLAGSDVATADEVNVEDLAPGTQAGRLTLWTESALAEVAER.

The segment at 44-109 is disordered; it reads QDTGTDEYAG…LDINTKERKL (66 aa). Residues 92–109 show a composition bias toward basic and acidic residues; that stretch reads PKAEKDRGLDINTKERKL.

This sequence belongs to the universal ribosomal protein uL4 family. In terms of assembly, part of the 50S ribosomal subunit.

Its function is as follows. One of the primary rRNA binding proteins, this protein initially binds near the 5'-end of the 23S rRNA. It is important during the early stages of 50S assembly. It makes multiple contacts with different domains of the 23S rRNA in the assembled 50S subunit and ribosome. Functionally, forms part of the polypeptide exit tunnel. The polypeptide is Large ribosomal subunit protein uL4 (Natronomonas pharaonis (strain ATCC 35678 / DSM 2160 / CIP 103997 / JCM 8858 / NBRC 14720 / NCIMB 2260 / Gabara) (Halobacterium pharaonis)).